The following is a 319-amino-acid chain: Pre T-cell antigen receptor alpha (319 aa).

The N-terminal stretch at 1–16 is a signal peptide; sequence MAESWLLLLLALGCPA. The Extracellular segment spans residues 17-160; that stretch reads LPTEVTTLLR…LRGTRALVLR (144 aa). Cysteines 58 and 118 form a disulfide. An N-linked (GlcNAc...) asparagine glycan is attached at Asn78. Residues 161–181 traverse the membrane as a helical segment; the sequence is LGALRLLLFKLLLLDVLLTCG. Residues 182 to 319 are Cytoplasmic-facing; sequence RLHAPPAARG…PPADPSFPGG (138 aa). Residues 189–207 are compositionally biased toward low complexity; it reads ARGDPAGASGPGAPSLPAP. The segment at 189–293 is disordered; sequence ARGDPAGASG…VLRAWSSGPS (105 aa). Residues 260–271 show a composition bias toward basic residues; the sequence is RRRRVHTRRPRR.

Heterodimer with TCRB; disulfide linked. This heterodimer assembles with CD3 proteins into a signaling-competent pre-T-cell receptor complex. Interacts with RHBDD1.

The protein resides in the membrane. The protein localises to the cell membrane. Functionally, component of the pre-T-cell receptor complex (composed of PTCRA, TCRB and the CD3 complex) that has a crucial role in early T-cell development, particularly alpha-beta T cell differentiation. The polypeptide is Pre T-cell antigen receptor alpha (PTCRA) (Bos taurus (Bovine)).